A 236-amino-acid polypeptide reads, in one-letter code: UPF0257 lipoprotein YnfC (236 aa).

The first 16 residues, 1–16 (MKKPLLLTLLCMILAG), serve as a signal peptide directing secretion. C17 is lipidated: N-palmitoyl cysteine. C17 carries S-diacylglycerol cysteine lipidation.

It belongs to the UPF0257 family.

Its subcellular location is the cell membrane. The protein is UPF0257 lipoprotein YnfC of Salmonella typhi.